The chain runs to 379 residues: Cytochrome b (379 aa).

4 helical membrane-spanning segments follow: residues 33–53 (FGSL…FLAM), 77–98 (WLIR…FIHV), 113–133 (WNIG…GYVL), and 178–198 (FFAF…VHLL). Positions 83 and 97 each coordinate heme b. 2 residues coordinate heme b: His-182 and His-196. Residue His-201 coordinates a ubiquinone. 4 consecutive transmembrane segments (helical) span residues 226–246 (IKDL…ALFF), 288–308 (LGGV…PLLN), 320–340 (ITQT…WIGG), and 347–367 (FTMI…ILMP).

The protein belongs to the cytochrome b family. The cytochrome bc1 complex contains 11 subunits: 3 respiratory subunits (MT-CYB, CYC1 and UQCRFS1), 2 core proteins (UQCRC1 and UQCRC2) and 6 low-molecular weight proteins (UQCRH/QCR6, UQCRB/QCR7, UQCRQ/QCR8, UQCR10/QCR9, UQCR11/QCR10 and a cleavage product of UQCRFS1). This cytochrome bc1 complex then forms a dimer. Requires heme b as cofactor.

Its subcellular location is the mitochondrion inner membrane. Functionally, component of the ubiquinol-cytochrome c reductase complex (complex III or cytochrome b-c1 complex) that is part of the mitochondrial respiratory chain. The b-c1 complex mediates electron transfer from ubiquinol to cytochrome c. Contributes to the generation of a proton gradient across the mitochondrial membrane that is then used for ATP synthesis. This chain is Cytochrome b (MT-CYB), found in Akodon dolores (Dolorous grass mouse).